The sequence spans 439 residues: GTPase Der (439 aa).

2 EngA-type G domains span residues 4 to 169 (AMVS…PQEE) and 177 to 352 (IKIA…EEYN). GTP contacts are provided by residues 10–17 (GRPNVGKS), 57–61 (DTGGL), 120–123 (NKVD), 183–190 (GKPNVGKS), 230–234 (DTAGI), and 295–298 (NKWD). One can recognise a KH-like domain in the interval 353–437 (KRITTGLLNN…PIVISTKKRG (85 aa)).

It belongs to the TRAFAC class TrmE-Era-EngA-EngB-Septin-like GTPase superfamily. EngA (Der) GTPase family. In terms of assembly, associates with the 50S ribosomal subunit.

Its function is as follows. GTPase that plays an essential role in the late steps of ribosome biogenesis. The polypeptide is GTPase Der (Thermoanaerobacter sp. (strain X514)).